A 262-amino-acid chain; its full sequence is tRNA pseudouridine synthase A (262 aa).

Residue D52 is the Nucleophile of the active site. Y103 lines the substrate pocket.

The protein belongs to the tRNA pseudouridine synthase TruA family.

It carries out the reaction uridine(38/39/40) in tRNA = pseudouridine(38/39/40) in tRNA. Functionally, formation of pseudouridine at positions 38, 39 and 40 in the anticodon stem and loop of transfer RNAs. The polypeptide is tRNA pseudouridine synthase A (Methanococcus maripaludis (strain DSM 14266 / JCM 13030 / NBRC 101832 / S2 / LL)).